The primary structure comprises 348 residues: NADH-ubiquinone oxidoreductase chain 2 (348 aa).

A run of 11 helical transmembrane segments spans residues 1-21 (MNPYVLMILMSSLGLGTTLTF), 25-45 (HWILAWMGLEINTLAIVPLMA), 60-80 (FLIQAAAAAMILFTSTTNAWI), 99-119 (MFALALKIGLAPMHFWLPEVL), 124-144 (LLTGLILSTWQKLAPMALIIQ), 151-171 (PLILTSLGIASSLIGGWSGLN), 178-197 (ILAYSSIAHMGWMIIVIQYA), 202-224 (LIALGTYIFMTSAAFLTLKVLSA), 239-259 (ILAAIATLVMLSLGGLPPLTG), 274-294 (DLPATATIMALTALLSLFFYL), and 326-346 (LTISVTVTMGLLPLTPAILML).

This sequence belongs to the complex I subunit 2 family. Core subunit of respiratory chain NADH dehydrogenase (Complex I) which is composed of 45 different subunits.

It localises to the mitochondrion inner membrane. It catalyses the reaction a ubiquinone + NADH + 5 H(+)(in) = a ubiquinol + NAD(+) + 4 H(+)(out). In terms of biological role, core subunit of the mitochondrial membrane respiratory chain NADH dehydrogenase (Complex I) which catalyzes electron transfer from NADH through the respiratory chain, using ubiquinone as an electron acceptor. Essential for the catalytic activity and assembly of complex I. The polypeptide is NADH-ubiquinone oxidoreductase chain 2 (mt-nd2) (Danio rerio (Zebrafish)).